The chain runs to 256 residues: Homeobox protein goosecoid (256 aa).

A DNA-binding region (homeobox) is located at residues 160-219; it reads KRRHRTIFTDEQLEALENLFQETKYPDVGTREQLARKVHLREEKVEVWFKNRRAKWRRQK. The tract at residues 213 to 256 is disordered; the sequence is AKWRRQKRSSSEESENAEKWNKTSSKASPEKREEEGKSDLDSDS. Positions 240-256 are enriched in basic and acidic residues; it reads SPEKREEEGKSDLDSDS.

It belongs to the paired homeobox family. Bicoid subfamily. As to expression, in early gastrulation, expressed in the dorsal lip. In later stages of development found in head, limbs and body wall. In the embryo, expressed in the postotic cranial neural crest cells, the frontonasal prominence, the first branchial arch and cleft, and specific regions of large joints.

It is found in the nucleus. In terms of biological role, regulates chordin (CHRD). May play a role in spatial programing within discrete embryonic fields or lineage compartments during organogenesis. In concert with NKX3-2, plays a role in defining the structural components of the middle ear; required for the development of the entire tympanic ring. Goosecoid-expressing regions of the gastrulating mouse egg cylinder have organizer-like activity when transplanted into Xenopus embryos. Probably involved in the regulatory networks that define neural crest cell fate specification and determine mesoderm cell lineages in mammals. This chain is Homeobox protein goosecoid (Gsc), found in Mus musculus (Mouse).